The chain runs to 211 residues: Thymidylate kinase (211 aa).

An ATP-binding site is contributed by 7-14; it reads GMDGSGKT.

The protein belongs to the thymidylate kinase family.

The enzyme catalyses dTMP + ATP = dTDP + ADP. Phosphorylation of dTMP to form dTDP in both de novo and salvage pathways of dTTP synthesis. The sequence is that of Thymidylate kinase from Mesoplasma florum (strain ATCC 33453 / NBRC 100688 / NCTC 11704 / L1) (Acholeplasma florum).